We begin with the raw amino-acid sequence, 121 residues long: CRISPR system Cms protein Csm2 (121 aa).

It belongs to the CRISPR-associated Csm2 family. As to quaternary structure, part of the Csm effector complex that includes at least Cas10(1), Csm2(3), Csm3(5), Csm4(1), Csm5(1) and mature crRNA. The Csm complex is elongated and slightly twisted with a maximal length of 215 Angstroms and a diameter of 75-80 Angstroms. It has been modeled to have a central protein filamant of Csm3 subunits along which the dsRNA helix of paired crRNA and target RNA binds. The filament is capped at one end by Cas10 and Csm4 and at the other end by Csm5; ssDNA is thought to bind to the N-terminal HD domain of Cas10. Csm with a precursor crRNA does not include Csm5, while Cas6, the enzyme probably involved in pre-crRNA processing, is found associated with a subset of the Csm complex.

Its function is as follows. CRISPR (clustered regularly interspaced short palindromic repeat) is an adaptive immune system that provides protection against mobile genetic elements (viruses, transposable elements and conjugative plasmids). CRISPR clusters contain spacers, sequences complementary to antecedent mobile elements, and target invading nucleic acids. CRISPR clusters are transcribed and processed into CRISPR RNA (crRNA). The type III-A Csm effector complex binds crRNA and acts as a crRNA-guided RNase, DNase and cyclic oligoadenylate synthase; binding of target RNA cognate to the crRNA is required for all activities. In a heterologous host this Csm effector complex restricts ssRNA phage MS2, suggesting it may target RNA viruses in vivo. In terms of biological role, csm functions as a non-specific ssDNase. Base-pairing between crRNA and target RNA to form a ternary Csm complex activates a ssDNase activity; target RNA cleavage suppresses the ssDNase, a temporal control that prevents uncontrolled DNA degradation. Viral RNA transcripts probably tether the Csm complex to the viral genome, recruiting Cas10 ssDNA activity which is able to degrade DNA in the transcription bubble, spatially controlling the DNase activity. This subunit may be involved in monitoring complementarity of crRNA and target RNA. The protein is CRISPR system Cms protein Csm2 of Streptococcus thermophilus.